A 392-amino-acid polypeptide reads, in one-letter code: Lysine acetyltransferase (392 aa).

It catalyses the reaction L-lysine + acetyl-CoA = N(6)-acetyl-L-lysine + CoA + H(+). Its pathway is amino-acid degradation; L-lysine degradation via acetylation pathway; glutarate from L-lysine: step 1/6. With respect to regulation, activity is inhibited by 5-aminovalerate. Its function is as follows. Lysine N-6-acetyl transferase (LAT) that catalyzes the first step of the lysine degradation pathway. This chain is Lysine acetyltransferase, found in Yarrowia lipolytica (strain CLIB 122 / E 150) (Yeast).